Here is a 195-residue protein sequence, read N- to C-terminus: Keratin-associated protein 4-3 (195 aa).

28 repeat units span residues 34 to 38 (CCRTT), 39 to 43 (CCRPS), 44 to 48 (CCISS), 49 to 53 (CCRPS), 54 to 58 (CCISS), 59 to 63 (CCKPS), 64 to 68 (CCRTT), 69 to 73 (CCRPS), 74 to 78 (CCISS), 79 to 83 (CCRPS), 84 to 88 (CCISS), 89 to 93 (CCKPS), 94 to 98 (CCRTT), 99 to 103 (CCRPS), 104 to 108 (CCISS), 109 to 113 (CCRPS), 114 to 118 (CCISS), 119 to 123 (CCKPS), 124 to 128 (CCQTT), 129 to 133 (CCRPS), 134 to 138 (CCISS), 144 to 148 (CCQPS), 149 to 153 (CCRPA), 154 to 158 (CCISS), 159 to 163 (CCHPS), 164 to 168 (CCVSS), 179 to 183 (CCRTT), and 189 to 193 (CCGSS). A 29 X 5 AA repeats of C-C-[GIKRQVH]-[SPT]-[STA] region spans residues 34–193 (CCRTTCCRPS…CFHPICCGSS (160 aa)).

This sequence belongs to the KRTAP type 4 family. As to quaternary structure, interacts with hair keratins. As to expression, expressed specifically in the middle/uper portions of the hair cortex. Not detected in the hair matrix or cuticle.

In the hair cortex, hair keratin intermediate filaments are embedded in an interfilamentous matrix, consisting of hair keratin-associated proteins (KRTAP), which are essential for the formation of a rigid and resistant hair shaft through their extensive disulfide bond cross-linking with abundant cysteine residues of hair keratins. The matrix proteins include the high-sulfur and high-glycine-tyrosine keratins. This is Keratin-associated protein 4-3 (KRTAP4-3) from Homo sapiens (Human).